We begin with the raw amino-acid sequence, 356 residues long: Phospho-N-acetylmuramoyl-pentapeptide-transferase (356 aa).

Helical transmembrane passes span 3–23 (QILF…PLLI), 51–71 (TMGG…AKVI), 80–100 (GLLV…DDYI), 114–134 (AKMA…LQFP), 152–172 (FGWS…ILAM), 185–205 (LATG…LWQF), 227–247 (PLDL…FLWW), 254–274 (IFMG…LAIL), 279–299 (FLLA…VIQV), and 333–353 (FWII…AGWA).

The protein belongs to the glycosyltransferase 4 family. MraY subfamily. Mg(2+) is required as a cofactor.

It localises to the cell membrane. It carries out the reaction UDP-N-acetyl-alpha-D-muramoyl-L-alanyl-gamma-D-glutamyl-meso-2,6-diaminopimeloyl-D-alanyl-D-alanine + di-trans,octa-cis-undecaprenyl phosphate = di-trans,octa-cis-undecaprenyl diphospho-N-acetyl-alpha-D-muramoyl-L-alanyl-D-glutamyl-meso-2,6-diaminopimeloyl-D-alanyl-D-alanine + UMP. The protein operates within cell wall biogenesis; peptidoglycan biosynthesis. Functionally, catalyzes the initial step of the lipid cycle reactions in the biosynthesis of the cell wall peptidoglycan: transfers peptidoglycan precursor phospho-MurNAc-pentapeptide from UDP-MurNAc-pentapeptide onto the lipid carrier undecaprenyl phosphate, yielding undecaprenyl-pyrophosphoryl-MurNAc-pentapeptide, known as lipid I. In Streptomyces griseus subsp. griseus (strain JCM 4626 / CBS 651.72 / NBRC 13350 / KCC S-0626 / ISP 5235), this protein is Phospho-N-acetylmuramoyl-pentapeptide-transferase.